The primary structure comprises 250 residues: uncharacterized protein (250 aa).

The interval 182-205 (HTPIVSIQTPPPPAPTPNRPDVPA) is disordered. A compositionally biased stretch (pro residues) spans 190–201 (TPPPPAPTPNRP). Residues 230–250 (TRISVIPLLSVLLLVIIIILL) form a helical membrane-spanning segment.

This sequence belongs to the ascovirus HvAV ORF18 family.

It is found in the membrane. This is an uncharacterized protein from Spodoptera frugiperda ascovirus 1a (SfAV-1a).